A 206-amino-acid polypeptide reads, in one-letter code: Guanylate kinase (206 aa).

One can recognise a Guanylate kinase-like domain in the interval 6–184; that stretch reads GTLYIISAPS…ALDDLKAIFR (179 aa). Residue 13–20 coordinates ATP; that stretch reads APSGAGKS.

The protein belongs to the guanylate kinase family.

It localises to the cytoplasm. It catalyses the reaction GMP + ATP = GDP + ADP. Essential for recycling GMP and indirectly, cGMP. The chain is Guanylate kinase from Pseudomonas fluorescens (strain Pf0-1).